Here is a 407-residue protein sequence, read N- to C-terminus: Arginine deiminase (407 aa).

Cys397 serves as the catalytic Amidino-cysteine intermediate.

The protein belongs to the arginine deiminase family.

The protein resides in the cytoplasm. It carries out the reaction L-arginine + H2O = L-citrulline + NH4(+). It functions in the pathway amino-acid degradation; L-arginine degradation via ADI pathway; carbamoyl phosphate from L-arginine: step 1/2. This chain is Arginine deiminase (arcA), found in Escherichia coli O6:H1 (strain CFT073 / ATCC 700928 / UPEC).